The following is a 457-amino-acid chain: Vasoactive intestinal polypeptide receptor (457 aa).

Residues 1–19 form the signal peptide; sequence MGLVEVVWWWRWRFGGGGG. The Extracellular portion of the chain corresponds to 20 to 141; it reads GLVVEVEVWW…KEQTAFYGTV (122 aa). Intrachain disulfides connect Cys-51–Cys-73, Cys-64–Cys-105, and Cys-87–Cys-122. Asn-59, Asn-70, Asn-100, and Asn-104 each carry an N-linked (GlcNAc...) asparagine glycan. Residues 142–166 traverse the membrane as a helical segment; the sequence is KTGYTIGHTLSLIALTAAMIILCLF. Residues 167–173 are Cytoplasmic-facing; it reads RKLHCTR. Residues 174-193 form a helical membrane-spanning segment; it reads NYIHMHLFMSFIMRAIAVFI. Over 194-215 the chain is Extracellular; sequence KDVTLFESGEPEHCFVSSVGCK. A disulfide bridge links Cys-214 with Cys-284. A helical membrane pass occupies residues 216–239; the sequence is AMMVFFQYCVMANFFWLLVEGLYL. Residues 240 to 253 lie on the Cytoplasmic side of the membrane; it reads HTLLVISFFSERKY. Residues 254–275 traverse the membrane as a helical segment; sequence FWWYILIGWGAPSVFITAWTVV. The Extracellular segment spans residues 276 to 292; the sequence is RIYFFNVGCWEEIIESP. The chain crosses the membrane as a helical span at residues 293–316; that stretch reads IWWIIKTPILVSILVNFILFICII. Over 317-341 the chain is Cytoplasmic; sequence RILVQKLHSPDVGHNETSQYSRLAK. Residues 342 to 361 form a helical membrane-spanning segment; it reads STLLLIPLFGIHYIMFAFFP. Topologically, residues 362–373 are extracellular; sequence DNFKAQVKLVFE. A helical transmembrane segment spans residues 374-393; that stretch reads LVVGSFQGFVVAVLYCFLNG. The Cytoplasmic portion of the chain corresponds to 394–457; sequence EVQAELKRKW…SSFQAEFSLV (64 aa).

It belongs to the G-protein coupled receptor 2 family. In terms of tissue distribution, expressed in pituitary, hypothalamus, small intestine and ovarian follicles.

It localises to the cell membrane. Functionally, this is a receptor for VIP. The activity of this receptor is mediated by G proteins which activate adenylyl cyclase. This Meleagris gallopavo (Wild turkey) protein is Vasoactive intestinal polypeptide receptor (VIPR1).